The sequence spans 808 residues: Dynamin-related protein 3A (808 aa).

A disordered region spans residues 1–31 (MTIEEVSGETPPSTPPSSSTPSPSSSTTNAA). Low complexity predominate over residues 16–28 (PSSSTPSPSSSTT). One can recognise a Dynamin-type G domain in the interval 56–330 (TIALPQVVVV…LVQHIKVLLP (275 aa)). The tract at residues 66-73 (GSQSSGKS) is G1 motif. 66-73 (GSQSSGKS) lines the GTP pocket. Residues 92–94 (CTR) are G2 motif. A G3 motif region spans residues 172 to 175 (DLPG). Residues 172–176 (DLPGI) and 241–244 (TKLD) contribute to the GTP site. Positions 241–244 (TKLD) are G4 motif. Positions 271–274 (VNRC) are G5 motif. The segment at 548 to 578 (IPHPVARPKDTVEPDRTSSSTSQVKSRSFLG) is disordered. Residues 554 to 563 (RPKDTVEPDR) are compositionally biased toward basic and acidic residues. The span at 564–575 (TSSSTSQVKSRS) shows a compositional bias: low complexity. The 92-residue stretch at 670-761 (IQITKLLLRS…TLDELPLEAD (92 aa)) folds into the GED domain. Residues 774 to 808 (LTSSKYSTSSSYSASPSTTRRSRRAGDQHQNGYGF) form a disordered region. The segment covering 775 to 792 (TSSKYSTSSSYSASPSTT) has biased composition (low complexity).

This sequence belongs to the TRAFAC class dynamin-like GTPase superfamily. Dynamin/Fzo/YdjA family. Homooligomer. Interacts with ARC5 on peroxisomes and ELM1 on mitochondria. In terms of tissue distribution, ubiquitous. Preferentially expressed in flowers.

It is found in the mitochondrion. The protein resides in the peroxisome. Its function is as follows. Involved in the control of mitochondrial and peroxisomal division and morphology. In association with PEX11C, PEX11D, PEX11E and FIS1B, is involved in cell cycle-associated constitutive self-replication of preexisting peroxisomes. The sequence is that of Dynamin-related protein 3A (DRP3A) from Arabidopsis thaliana (Mouse-ear cress).